The following is a 123-amino-acid chain: WAP four-disulfide core domain protein 5 (123 aa).

The signal sequence occupies residues methionine 1–glycine 24. WAP domains lie at lysine 27–arginine 73 and valine 74–alanine 121. Cystine bridges form between cysteine 34–cysteine 62, cysteine 41–cysteine 66, cysteine 49–cysteine 61, cysteine 55–cysteine 70, cysteine 81–cysteine 109, cysteine 88–cysteine 113, cysteine 96–cysteine 108, and cysteine 102–cysteine 117.

It localises to the secreted. Its function is as follows. Putative acid-stable proteinase inhibitor. In Pan troglodytes (Chimpanzee), this protein is WAP four-disulfide core domain protein 5 (WFDC5).